We begin with the raw amino-acid sequence, 643 residues long: Alpha-dioxygenase PIOX (643 aa).

The active-site Proton acceptor is H167. Position 168 (D168) interacts with Ca(2+). H172 contributes to the heme b binding site. T220, W222, D224, and S226 together coordinate Ca(2+). Residues H392, R489, and R493 each coordinate heme b.

It belongs to the peroxidase family. It depends on heme b as a cofactor. Ca(2+) serves as cofactor.

It catalyses the reaction a 1,2-saturated fatty acid + O2 = a (2R)-2-hydroperoxy fatty acid. The enzyme catalyses (9Z,12Z,15Z)-octadecatrienoate + O2 = (R)-2-hydroperoxy-(9Z,12Z,15Z)-octadecatrienoate. It carries out the reaction (9Z,12Z)-octadecadienoate + O2 = (2R,9Z,12Z)-2-hydroperoxyoctadecadienoate. In terms of biological role, alpha-dioxygenase that catalyzes the primary oxygenation step of a variety of 14-20 carbon fatty acids, containing up to three unsaturated bonds, into their corresponding 2R-hydroperoxides. Involved in the production of oxylipins that function in cell signaling, wound healing, and protection from infection. This chain is Alpha-dioxygenase PIOX, found in Nicotiana tabacum (Common tobacco).